The following is a 362-amino-acid chain: Caspase activity and apoptosis inhibitor 1 (362 aa).

Residues 1–14 are compositionally biased toward basic residues; it reads MTGKKSSREKRRKR. 2 disordered regions span residues 1 to 44 and 65 to 101; these read MTGK…SGCG and TGGG…GSLQ. Residues 19 to 32 show a composition bias toward low complexity; sequence AAAALAAPDLVPAV. Gly residues-rich tracts occupy residues 33 to 44 and 65 to 74; these read GGSGSGSTSGCG and TGGGSGGSCW. Position 89 is a phosphoserine (S89). Residue T90 is modified to Phosphothreonine. K105 participates in a covalent cross-link: Glycyl lysine isopeptide (Lys-Gly) (interchain with G-Cter in SUMO2). Residues S121 and S204 each carry the phosphoserine modification. Disordered stretches follow at residues 226–251, 269–291, and 309–332; these read SCVD…GKGE, GPCN…EAGQ, and LAES…DVQP. Basic and acidic residues predominate over residues 235–251; sequence RENKQPEGLELKQGKGE. Residues 273–282 are compositionally biased toward low complexity; that stretch reads EEAAAPEVPE. A coiled-coil region spans residues 282–312; that stretch reads ENTVQSEAGQIDDLEKDIEKSVNEILGLAES. Residue S313 is modified to Phosphoserine.

Functionally, anti-apoptotic protein that modulates a caspase-10 dependent mitochondrial caspase-3/9 feedback amplification loop. This Bos taurus (Bovine) protein is Caspase activity and apoptosis inhibitor 1 (CAAP1).